Here is a 268-residue protein sequence, read N- to C-terminus: Small ribosomal subunit protein uS2 (268 aa).

The protein belongs to the universal ribosomal protein uS2 family.

The chain is Small ribosomal subunit protein uS2 from Caulobacter vibrioides (strain ATCC 19089 / CIP 103742 / CB 15) (Caulobacter crescentus).